The following is a 561-amino-acid chain: Dihydroxy-acid dehydratase (561 aa).

A Mg(2+)-binding site is contributed by D80. C121 contributes to the [2Fe-2S] cluster binding site. 2 residues coordinate Mg(2+): D122 and K123. Residue K123 is modified to N6-carboxylysine. C194 serves as a coordination point for [2Fe-2S] cluster. Residue E448 participates in Mg(2+) binding. The active-site Proton acceptor is the S474.

Belongs to the IlvD/Edd family. As to quaternary structure, homodimer. [2Fe-2S] cluster serves as cofactor. Mg(2+) is required as a cofactor.

It catalyses the reaction (2R)-2,3-dihydroxy-3-methylbutanoate = 3-methyl-2-oxobutanoate + H2O. The enzyme catalyses (2R,3R)-2,3-dihydroxy-3-methylpentanoate = (S)-3-methyl-2-oxopentanoate + H2O. It functions in the pathway amino-acid biosynthesis; L-isoleucine biosynthesis; L-isoleucine from 2-oxobutanoate: step 3/4. It participates in amino-acid biosynthesis; L-valine biosynthesis; L-valine from pyruvate: step 3/4. Functionally, functions in the biosynthesis of branched-chain amino acids. Catalyzes the dehydration of (2R,3R)-2,3-dihydroxy-3-methylpentanoate (2,3-dihydroxy-3-methylvalerate) into 2-oxo-3-methylpentanoate (2-oxo-3-methylvalerate) and of (2R)-2,3-dihydroxy-3-methylbutanoate (2,3-dihydroxyisovalerate) into 2-oxo-3-methylbutanoate (2-oxoisovalerate), the penultimate precursor to L-isoleucine and L-valine, respectively. The sequence is that of Dihydroxy-acid dehydratase from Anaeromyxobacter sp. (strain Fw109-5).